The chain runs to 689 residues: Beta-adrenergic receptor kinase 1 (689 aa).

The N-terminal stretch occupies residues 1–190 (MADLEAVLAD…ELNIHLTMND (190 aa)). Residues 54 to 175 (TFEKIFSQKL…IESDKFTRFC (122 aa)) form the RGS domain. The Protein kinase domain occupies 191-453 (FSVHRIIGRG…AQEVKESPFF (263 aa)). ATP contacts are provided by residues 197-205 (IGRGGFGEV) and Lys220. Asp317 serves as the catalytic Proton acceptor. Residues 454 to 521 (RSLDWQMVFL…TISERWQQEV (68 aa)) form the AGC-kinase C-terminal domain. Residues 558–652 (DCIMHGYMSK…WKKELRDAYR (95 aa)) enclose the PH domain. A Phosphoserine modification is found at Ser670.

The protein belongs to the protein kinase superfamily. AGC Ser/Thr protein kinase family. GPRK subfamily. In terms of assembly, interacts with the heterodimer formed by GNB1 and GNG2. Interacts with GIT1. Interacts with, and phosphorylates chemokine-stimulated CCR5. Interacts with ARRB1. Interacts with LPAR1 and LPAR2. Interacts with RALA in response to LPAR1 activation. ADRBK1 and RALA mutually inhibit each other's binding to LPAR1. Interacts with ADRB2. Expressed in peripheral blood leukocytes.

The protein resides in the cytoplasm. It localises to the cell membrane. The protein localises to the postsynapse. It is found in the presynapse. It catalyses the reaction [beta-adrenergic receptor] + ATP = [beta-adrenergic receptor]-phosphate + ADP + H(+). With respect to regulation, in contrast to other AGC family kinases, the catalytic activity is solely regulated by the binding of substrates and ligands, not by phosphorylation of the kinase domain. Its function is as follows. Specifically phosphorylates the agonist-occupied form of the beta-adrenergic and closely related receptors, probably inducing a desensitization of them. Key regulator of LPAR1 signaling. Competes with RALA for binding to LPAR1 thus affecting the signaling properties of the receptor. Desensitizes LPAR1 and LPAR2 in a phosphorylation-independent manner. Positively regulates ciliary smoothened (SMO)-dependent Hedgehog (Hh) signaling pathway by facilitating the trafficking of SMO into the cilium and the stimulation of SMO activity. Inhibits relaxation of airway smooth muscle in response to blue light. The chain is Beta-adrenergic receptor kinase 1 from Homo sapiens (Human).